Consider the following 116-residue polypeptide: RutC family protein HI_1627 (116 aa).

Belongs to the RutC family.

This chain is RutC family protein HI_1627, found in Haemophilus influenzae (strain ATCC 51907 / DSM 11121 / KW20 / Rd).